Reading from the N-terminus, the 417-residue chain is Aminoacyltransferase FemB (417 aa).

It belongs to the FemABX family.

Its subcellular location is the cytoplasm. The enzyme catalyses MurNAc-L-Ala-D-isoglutaminyl-L-Lys-(N(6)-tri-Gly)-D-Ala-D-Ala-diphospho-di-trans,octa-cis-undecaprenyl-GlcNAc + 2 glycyl-tRNA(Gly) = MurNAc-L-Ala-D-isoglutaminyl-L-Lys-(N(6)-penta-Gly)-D-Ala-D-Ala-diphospho-di-trans,octa-cis-undecaprenyl-GlcNAc + 2 tRNA(Gly) + 2 H(+). Catalyzes the incorporation of amino acid(s) into the interchain peptide bridge of peptidoglycan, using aminoacyl-tRNA as amino acid donor. The protein is Aminoacyltransferase FemB (femB) of Staphylococcus epidermidis.